We begin with the raw amino-acid sequence, 871 residues long: Tegument protein UL47 homolog (871 aa).

The disordered stretch occupies residues 1 to 212; sequence MDQHHGARGG…DEDDMEVIRD (212 aa). Residues 13–33 carry the Nuclear localization signal motif; that stretch reads IRRPRRSIESRSHPFRATGNT. Polar residues-rich tracts occupy residues 30–41 and 59–81; these read TGNTQRTYSTPR and EQAS…STSF. Acidic residues-rich tracts occupy residues 114 to 134, 146 to 155, and 185 to 207; these read SSSE…EEDQ, SSDENDEEED, and SESE…EDDM.

The protein belongs to the alphaherpesvirinae HHV-1 UL47 family. As to quaternary structure, interacts with US3 kinase. Interacts with UL31 and UL34; these interactions seem important for efficient virion nuclear egress. Interacts with UL41/VHS. Phosphorylated by US3. This phosphorylation is required for proper nuclear localization.

The protein resides in the virion tegument. Its subcellular location is the host nucleus. The protein localises to the host cytoplasm. In terms of biological role, tegument protein that can bind to various RNA transcripts. Plays a role in the attenuation of selective viral and cellular mRNA degradation by modulating the activity of host shutoff RNase UL41/VHS. Also plays a role in the primary envelopment of virions in the perinuclear space, probably by interacting with two nuclear egress proteins UL31 and UL34. In Equus caballus (Horse), this protein is Tegument protein UL47 homolog.